A 369-amino-acid chain; its full sequence is Septin-5 (369 aa).

At threonine 13 the chain carries Phosphothreonine. Residues lysine 41–glutamine 314 enclose the Septin-type G domain. Residues glycine 51–serine 58 are G1 motif. GTP is bound by residues glycine 51–serine 58, threonine 85, and glycine 111. The G3 motif stretch occupies residues aspartate 108–glycine 111. Omega-N-methylarginine is present on arginine 168. Residues alanine 189–aspartate 192 are G4 motif. Residue lysine 190–glutamate 198 coordinates GTP. Serine 225 bears the Phosphoserine mark. GTP is bound by residues glycine 248 and arginine 263. At serine 327 the chain carries Phosphoserine. Threonine 336 carries the post-translational modification Phosphothreonine. A coiled-coil region spans residues aspartate 338–glutamine 369.

It belongs to the TRAFAC class TrmE-Era-EngA-EngB-Septin-like GTPase superfamily. Septin GTPase family. In terms of assembly, septins polymerize into heterooligomeric protein complexes that form filaments, and can associate with cellular membranes, actin filaments and microtubules. GTPase activity is required for filament formation. Interacts with SEPTIN2 and SEPTIN5. In platelets, associated with a complex containing STX4. Interacts with PRKN; this interaction leads to SEPTIN5 ubiquitination and degradation. Interacts with DYRK1A. Interacts with STX1A; in the cerebellar cortex. In terms of processing, phosphorylated by DYRK1A. As to expression, expressed in brain and testis and at lower level in heart, spleen, lung and kidney.

The protein localises to the cytoplasm. It localises to the cytoskeleton. In terms of biological role, filament-forming cytoskeletal GTPase. May play a role in cytokinesis (Potential). May play a role in platelet secretion. The chain is Septin-5 from Rattus norvegicus (Rat).